Here is a 252-residue protein sequence, read N- to C-terminus: MFKVVICDDERIIREGLKQIIPWGDYHFNTIYTAKDGVEALSLIQQHQPELVITDIRMPRKNGVDLLNDIALLDCNVIILSSYDDFEYMKAGIQHHVLDYLLKPVDHAQLEVILGRLVRTLLEQQSQNGRSLASCHDAFQPLLKVEYDDYYVNQIVDQIKQSYQTKVTVSDLIQHIDVSESYAMRTFKDHVGITIVDYLNRYRILQSLQLLDRHYKHYEIADKVGFSEYKMFSYHFKKYLQMSPSDYCKQAK.

The 116-residue stretch at lysine 3 to valine 118 folds into the Response regulatory domain. Aspartate 55 is subject to 4-aspartylphosphate. One can recognise an HTH araC/xylS-type domain in the interval asparagine 153–glutamine 250. DNA-binding regions (H-T-H motif) lie at residues serine 170–valine 191 and histidine 217–leucine 240.

In terms of processing, phosphorylated by HptS.

It is found in the cytoplasm. Member of the two-component regulatory system HptS/HptR that regulates genes involved in hexose phosphate transport system in response to changes in extracellular phosphate sources. Activates uhpT expression to facilitate glucose-6-phosphate/G6P utilization by directly binding to its promoter. Antagonizes CcpA-dependent transcription of a subset of CcpA-regulated genes involved in antibiotic susceptibility. This chain is Transcriptional regulatory protein HptR (hptR), found in Staphylococcus aureus (strain Mu50 / ATCC 700699).